Reading from the N-terminus, the 386-residue chain is LL-diaminopimelate aminotransferase (386 aa).

The substrate site is built by tyrosine 13 and glycine 38. Pyridoxal 5'-phosphate contacts are provided by residues tyrosine 67, 101–102 (SK), tyrosine 126, asparagine 176, tyrosine 207, and 235–237 (SLS). Substrate-binding residues include lysine 102, tyrosine 126, and asparagine 176. N6-(pyridoxal phosphate)lysine is present on lysine 238. Arginine 246 lines the pyridoxal 5'-phosphate pocket. Arginine 364 is a binding site for substrate.

Belongs to the class-I pyridoxal-phosphate-dependent aminotransferase family. LL-diaminopimelate aminotransferase subfamily. In terms of assembly, homodimer. Requires pyridoxal 5'-phosphate as cofactor.

It catalyses the reaction (2S,6S)-2,6-diaminopimelate + 2-oxoglutarate = (S)-2,3,4,5-tetrahydrodipicolinate + L-glutamate + H2O + H(+). It participates in amino-acid biosynthesis; L-lysine biosynthesis via DAP pathway; LL-2,6-diaminopimelate from (S)-tetrahydrodipicolinate (aminotransferase route): step 1/1. In terms of biological role, involved in the synthesis of meso-diaminopimelate (m-DAP or DL-DAP), required for both lysine and peptidoglycan biosynthesis. Catalyzes the direct conversion of tetrahydrodipicolinate to LL-diaminopimelate. In Natranaerobius thermophilus (strain ATCC BAA-1301 / DSM 18059 / JW/NM-WN-LF), this protein is LL-diaminopimelate aminotransferase.